The chain runs to 522 residues: MSLRVHTLPTLLGAVVRPGCRELLCLLMITVTVGPGASGVCPTACICATDIVSCTNKNLSKVPGNLFRLIKRLDLSYNRIGLLDSEWIPVSFAKLNTLILRHNNITSISTGSFSTTPNLKCLDLSSNKLKTVKNAVFQELKVLEVLLLYNNHISYLDPSAFGGLSQLQKLYLSGNFLTQFPMDLYVGRFKLAELMFLDVSYNRIPSMPMHHINLVPGKQLRGIYLHGNPFVCDCSLYSLLVFWYRRHFSSVMDFKNDYTCRLWSDSRHSRQVLLLQDSFMNCSDSIINGSFRALGFIHEAQVGERLMVHCDSKTGNANTDFIWVGPDNRLLEPDKEMENFYVFHNGSLVIESPRFEDAGVYSCIAMNKQRLLNETVDVTINVSNFTVSRSHAHEAFNTAFTTLAACVASIVLVLLYLYLTPCPCKCKTKRQKNMLHQSNAHSSILSPGPASDASADERKAGAGKRVVFLEPLKDTAAGQNGKVRLFPSEAVIAEGILKSTRGKSDSDSVNSVFSDTPFVAST.

The signal sequence occupies residues 1-39 (MSLRVHTLPTLLGAVVRPGCRELLCLLMITVTVGPGASG). The region spanning 40–68 (VCPTACICATDIVSCTNKNLSKVPGNLFR) is the LRRNT domain. Topologically, residues 40-398 (VCPTACICAT…RSHAHEAFNT (359 aa)) are extracellular. 2 disulfides stabilise this stretch: cysteine 41–cysteine 47 and cysteine 45–cysteine 54. A glycan (N-linked (GlcNAc...) asparagine) is linked at asparagine 58. LRR repeat units lie at residues 69-90 (LIKRLDLSYNRIGLLDSEWIPV), 94-115 (KLNTLILRHNNITSISTGSFST), 118-139 (NLKCLDLSSNKLKTVKNAVFQE), 142-163 (VLEVLLLYNNHISYLDPSAFGG), 166-187 (QLQKLYLSGNFLTQFPMDLYVG), and 193-214 (ELMFLDVSYNRIPSMPMHHINL). A glycan (N-linked (GlcNAc...) asparagine) is linked at asparagine 104. Positions 228–284 (NPFVCDCSLYSLLVFWYRRHFSSVMDFKNDYTCRLWSDSRHSRQVLLLQDSFMNCSD) constitute an LRRCT domain. 2 cysteine pairs are disulfide-bonded: cysteine 232–cysteine 260 and cysteine 234–cysteine 282. N-linked (GlcNAc...) asparagine glycans are attached at residues asparagine 281, asparagine 288, asparagine 345, asparagine 373, asparagine 381, and asparagine 384. The 91-residue stretch at 289 to 379 (GSFRALGFIH…RLLNETVDVT (91 aa)) folds into the Ig-like C2-type domain. A disulfide bridge links cysteine 310 with cysteine 363. The chain crosses the membrane as a helical span at residues 399–419 (AFTTLAACVASIVLVLLYLYL). The Cytoplasmic segment spans residues 420–522 (TPCPCKCKTK…FSDTPFVAST (103 aa)). A disordered region spans residues 501–522 (RGKSDSDSVNSVFSDTPFVAST).

Belongs to the immunoglobulin superfamily. AMIGO family. As to quaternary structure, binds itself as well as AMIGO1 and AMIGO3. As to expression, highest levels in breast, ovary, cervix, and uterus. Lower levels in lung, colon, and rectum. Differentially expressed in 56% of thyroid, 57% of pancreatic and 45% of stomach cancers.

The protein localises to the cell membrane. It localises to the nucleus. In terms of biological role, required for depolarization-dependent survival of cultured cerebellar granule neurons. May mediate homophilic as well as heterophilic cell-cell interaction with AMIGO1 or AMIGO3. May contribute to signal transduction through its intracellular domain. May be required for tumorigenesis of a subset of gastric adenocarcinomas. The sequence is that of Amphoterin-induced protein 2 from Homo sapiens (Human).